The following is a 75-amino-acid chain: Small ribosomal subunit protein bS18c (75 aa).

This sequence belongs to the bacterial ribosomal protein bS18 family. Part of the 30S ribosomal subunit.

The protein localises to the plastid. It localises to the chloroplast. The sequence is that of Small ribosomal subunit protein bS18c (rps18) from Anthoceros angustus (Hornwort).